The chain runs to 346 residues: 4-hydroxy-2-oxohexanoate aldolase (346 aa).

The region spanning 7–259 is the Pyruvate carboxyltransferase domain; that stretch reads VRITDTSLRD…KTGIDFFDIA (253 aa). 15–16 is a binding site for substrate; sequence RD. D16 provides a ligand contact to Mn(2+). Residue H19 is the Proton acceptor of the active site. The substrate site is built by S169 and H198. 2 residues coordinate Mn(2+): H198 and H200. Position 289 (Y289) interacts with substrate.

This sequence belongs to the 4-hydroxy-2-oxovalerate aldolase family. Homodimer. Forms a heterotetramer composed of two aldolase (HsaF) and two dehydrogenase (HsaG) subunits. Mn(2+) is required as a cofactor.

It catalyses the reaction (S)-4-hydroxy-2-oxohexanoate = propanal + pyruvate. The enzyme catalyses (S)-4-hydroxy-2-oxopentanoate = acetaldehyde + pyruvate. Functionally, involved in cholesterol degradation. Catalyzes the retro-aldol cleavage of 4-hydroxy-2-oxohexanoate (HOHA) to pyruvate and propanal. Can also catalyze the cleavage of 4-hydroxy-2-oxopentanoate (HOPA) to pyruvate and acetaldehyde. The aldehydes produced by this reaction are directly channeled to the dehydrogenase HsaG. This chain is 4-hydroxy-2-oxohexanoate aldolase, found in Mycobacterium bovis (strain ATCC BAA-935 / AF2122/97).